A 217-amino-acid polypeptide reads, in one-letter code: 3,4-dihydroxy-2-butanone 4-phosphate synthase (217 aa).

Residues R37 to E38, D42, R150 to T154, and E174 contribute to the D-ribulose 5-phosphate site. Position 38 (E38) interacts with Mg(2+). Residue H153 coordinates Mg(2+).

The protein belongs to the DHBP synthase family. In terms of assembly, homodimer. It depends on Mg(2+) as a cofactor. Mn(2+) serves as cofactor.

It carries out the reaction D-ribulose 5-phosphate = (2S)-2-hydroxy-3-oxobutyl phosphate + formate + H(+). It participates in cofactor biosynthesis; riboflavin biosynthesis; 2-hydroxy-3-oxobutyl phosphate from D-ribulose 5-phosphate: step 1/1. Functionally, catalyzes the conversion of D-ribulose 5-phosphate to formate and 3,4-dihydroxy-2-butanone 4-phosphate. The protein is 3,4-dihydroxy-2-butanone 4-phosphate synthase of Pectobacterium atrosepticum (strain SCRI 1043 / ATCC BAA-672) (Erwinia carotovora subsp. atroseptica).